Reading from the N-terminus, the 467-residue chain is MPLTLYDKIWNDHLVDQQDDGTALLFVDRHLVHEVTSPQAFEGLRNSNRKVRQPGLTLAVADHNVPTTDRSKGIADAESKIQVDTLESNCKEFGVQYLGMNDKRQGIVHIIGPEQGFTQPGTVIVCGDSHTATHGAFGALAFGIGTSEVEHVLATQTLVQKKAKNFRINVNGKLPIGVTSKDVILQIIGQIGTAGGTGSVIEYAGSLISSLSVEQRMTICNMTIEGGARAGLIAPDEKIFEYLKGKPMSPKNENWDKAMKYWESLKTDDGAKFDKEINLVAEDILPMITWGTSPQDVITIDGKVPNPKNEQDEDKKNSLERSLNYMGLKADTLATDIKIDKVFIGSCTNGRIEDLREAAKILKDKKKASHVQAMVVPGSGLVKEQAEQEGLDKIFIASGFEWREPGCSMCLAMNADKLKPGERCASTSNRNFEGRQGRGGRTHLVSPGMAAAAAISGNLDDVRKYQN.

[4Fe-4S] cluster contacts are provided by C347, C407, and C410.

This sequence belongs to the aconitase/IPM isomerase family. LeuC type 1 subfamily. In terms of assembly, heterodimer of LeuC and LeuD. The cofactor is [4Fe-4S] cluster.

The catalysed reaction is (2R,3S)-3-isopropylmalate = (2S)-2-isopropylmalate. It participates in amino-acid biosynthesis; L-leucine biosynthesis; L-leucine from 3-methyl-2-oxobutanoate: step 2/4. In terms of biological role, catalyzes the isomerization between 2-isopropylmalate and 3-isopropylmalate, via the formation of 2-isopropylmaleate. In Pelagibacter ubique (strain HTCC1062), this protein is 3-isopropylmalate dehydratase large subunit.